We begin with the raw amino-acid sequence, 538 residues long: CTP synthase (538 aa).

Residues 1-265 are amidoligase domain; the sequence is MARYIFVTGG…DLQVLNYFKL (265 aa). Ser13 is a CTP binding site. Ser13 contacts UTP. ATP-binding positions include 14–19 and Asp71; that span reads SLGKGL. Mg(2+) is bound by residues Asp71 and Glu139. CTP contacts are provided by residues 146–148, 186–191, and Lys222; these read DIE and KTKPTQ. UTP contacts are provided by residues 186-191 and Lys222; that span reads KTKPTQ. Positions 291–538 constitute a Glutamine amidotransferase type-1 domain; that stretch reads NIAIIGKYVE…SFIKAAKNHK (248 aa). L-glutamine is bound at residue Gly353. The active-site Nucleophile; for glutamine hydrolysis is the Cys380. L-glutamine is bound by residues 381–384, Glu404, and Arg468; that span reads YGMQ. Active-site residues include His513 and Glu515.

Belongs to the CTP synthase family. In terms of assembly, homotetramer.

The catalysed reaction is UTP + L-glutamine + ATP + H2O = CTP + L-glutamate + ADP + phosphate + 2 H(+). It carries out the reaction L-glutamine + H2O = L-glutamate + NH4(+). It catalyses the reaction UTP + NH4(+) + ATP = CTP + ADP + phosphate + 2 H(+). It participates in pyrimidine metabolism; CTP biosynthesis via de novo pathway; CTP from UDP: step 2/2. With respect to regulation, allosterically activated by GTP, when glutamine is the substrate; GTP has no effect on the reaction when ammonia is the substrate. The allosteric effector GTP functions by stabilizing the protein conformation that binds the tetrahedral intermediate(s) formed during glutamine hydrolysis. Inhibited by the product CTP, via allosteric rather than competitive inhibition. Its function is as follows. Catalyzes the ATP-dependent amination of UTP to CTP with either L-glutamine or ammonia as the source of nitrogen. Regulates intracellular CTP levels through interactions with the four ribonucleotide triphosphates. The polypeptide is CTP synthase (Pelagibacter ubique (strain HTCC1062)).